Reading from the N-terminus, the 364-residue chain is Methylthioribose-1-phosphate isomerase (364 aa).

Substrate is bound by residues 49-51 (RGA), arginine 89, and glutamine 201. The active-site Proton donor is aspartate 242. 252-253 (NK) serves as a coordination point for substrate.

It belongs to the eIF-2B alpha/beta/delta subunits family. MtnA subfamily.

The enzyme catalyses 5-(methylsulfanyl)-alpha-D-ribose 1-phosphate = 5-(methylsulfanyl)-D-ribulose 1-phosphate. The protein operates within amino-acid biosynthesis; L-methionine biosynthesis via salvage pathway; L-methionine from S-methyl-5-thio-alpha-D-ribose 1-phosphate: step 1/6. Functionally, catalyzes the interconversion of methylthioribose-1-phosphate (MTR-1-P) into methylthioribulose-1-phosphate (MTRu-1-P). The polypeptide is Methylthioribose-1-phosphate isomerase (Leptospira interrogans serogroup Icterohaemorrhagiae serovar Lai (strain 56601)).